The chain runs to 134 residues: ATP synthase epsilon chain (134 aa).

This sequence belongs to the ATPase epsilon chain family. F-type ATPases have 2 components, CF(1) - the catalytic core - and CF(0) - the membrane proton channel. CF(1) has five subunits: alpha(3), beta(3), gamma(1), delta(1), epsilon(1). CF(0) has three main subunits: a, b and c.

The protein localises to the cell inner membrane. Its function is as follows. Produces ATP from ADP in the presence of a proton gradient across the membrane. The sequence is that of ATP synthase epsilon chain from Nitratidesulfovibrio vulgaris (strain DSM 19637 / Miyazaki F) (Desulfovibrio vulgaris).